The following is a 149-amino-acid chain: Nucleoside diphosphate kinase (149 aa).

6 residues coordinate ATP: Lys9, Phe57, Arg85, Thr91, Arg102, and Asn112. His115 serves as the catalytic Pros-phosphohistidine intermediate.

It belongs to the NDK family. Homotetramer. Requires Mg(2+) as cofactor.

It localises to the cytoplasm. The enzyme catalyses a 2'-deoxyribonucleoside 5'-diphosphate + ATP = a 2'-deoxyribonucleoside 5'-triphosphate + ADP. It carries out the reaction a ribonucleoside 5'-diphosphate + ATP = a ribonucleoside 5'-triphosphate + ADP. Its function is as follows. Major role in the synthesis of nucleoside triphosphates other than ATP. The ATP gamma phosphate is transferred to the NDP beta phosphate via a ping-pong mechanism, using a phosphorylated active-site intermediate. This chain is Nucleoside diphosphate kinase, found in Roseiflexus castenholzii (strain DSM 13941 / HLO8).